Consider the following 519-residue polypeptide: Alternative NAD(P)H-ubiquinone oxidoreductase C1, chloroplastic/mitochondrial (519 aa).

The N-terminal 52 residues, 1–52, are a transit peptide targeting the chloroplast and mitochondrion; the sequence is MAVLSSVSSLIPFSYGATRLTSKASLASRTSGFNLSSRWNSTRNSPMLYLSR. 82 to 118 provides a ligand contact to FAD; the sequence is RVCILGGGFGGLYTALRLESLVWPEDKKPQVVLVDQS. 246 to 282 contributes to the NAD(+) binding site; that stretch reads IKVAVVGCGYAGVELAATISERLQDRGIVQSINVSKN.

This sequence belongs to the NADH dehydrogenase family. Requires FAD as cofactor. As to expression, flowers, roots, leaves and stems.

It localises to the mitochondrion. Its subcellular location is the mitochondrion inner membrane. It is found in the plastid. The protein localises to the chloroplast. The protein resides in the plastoglobule. The enzyme catalyses a quinone + NADH + H(+) = a quinol + NAD(+). It carries out the reaction a ubiquinone + NADH + H(+) = a ubiquinol + NAD(+). The catalysed reaction is demethylphylloquinone + NADPH + H(+) = demethylphylloquinol + NADP(+). With respect to regulation, inhibited by dicumarol. In terms of biological role, bifunctional oxidoreductase ables to act both on prenyl naphthoquinones and on prenyl benzoquinones. May serve a respiratory function. Involved in an electron flow toward the plastoglobule plastoquinone pool. Required for plastochromanol-8 accumulation and for phylloquinone (vitamin K1) production. Probably not directly involved in cyclic or chlororespiratory electron flows under standard growth conditions, but participates in the redox metabolism of plastoquinone-9 and the tocophrol recycling-intermediate alpha-tocopherol quinone. Catalyzes the penultimate step in the biosynthesis of vitamin K1. The polypeptide is Alternative NAD(P)H-ubiquinone oxidoreductase C1, chloroplastic/mitochondrial (Arabidopsis thaliana (Mouse-ear cress)).